The primary structure comprises 353 residues: UPF0283 membrane protein KPN78578_12740 (353 aa).

3 helical membrane-spanning segments follow: residues 70-90 (MVSA…VQWT), 99-119 (WIAL…VGSL), and 213-233 (ESTL…FIAW).

This sequence belongs to the UPF0283 family.

The protein localises to the cell inner membrane. The sequence is that of UPF0283 membrane protein KPN78578_12740 from Klebsiella pneumoniae subsp. pneumoniae (strain ATCC 700721 / MGH 78578).